The sequence spans 57 residues: Beta-defensin 3 (57 aa).

A Pyrrolidone carboxylic acid modification is found at Q16. Disulfide bonds link C24-C53, C31-C46, and C36-C54.

Belongs to the beta-defensin family. As to expression, neutrophilic granules.

It localises to the secreted. Functionally, has bactericidal activity. Active against E.coli ML35 and S.aureus 502A. The polypeptide is Beta-defensin 3 (DEFB3) (Bos taurus (Bovine)).